The following is a 245-amino-acid chain: Cypemycin N-terminal methyltransferase (245 aa).

It belongs to the methyltransferase superfamily.

The catalysed reaction is N-terminal L-alanyl-[cypemycin] + 2 S-adenosyl-L-methionine = N-terminal N,N-dimethyl-L-alanyl-[cypemycin] + 2 S-adenosyl-L-homocysteine + 3 H(+). Its function is as follows. Involved in the biosynthesis of the lanaridin cypemycin. The enzyme can methylate a variety of oligopeptides, cyclic peptides and the epsilon-amino group of lysine. The chain is Cypemycin N-terminal methyltransferase from Streptomyces sp.